The sequence spans 282 residues: Putative SLC9B1-like protein SLC9B1P1 (282 aa).

7 helical membrane-spanning segments follow: residues 27–47 (LLAITGFNTCLSIVFYSGGMI), 51–71 (IASLRNVCISLLAGIVLGFFV), 87–107 (GFLVLITFVSAVLGSQPIGLH), 135–155 (IITNVWDIFQPLLFGLVGAEV), 174–194 (LALCVRILNIYLLMCFAGFSF), 198–218 (IFIALAWMPKATVQAVLGPLA), and 239–259 (VAFLAIMITAPNGALLMGILG).

Belongs to the monovalent cation:proton antiporter 1 (CPA1) transporter (TC 2.A.36) family.

It is found in the membrane. The polypeptide is Putative SLC9B1-like protein SLC9B1P1 (SLC9B1P1) (Homo sapiens (Human)).